A 656-amino-acid chain; its full sequence is Pumilio homology domain family member 6 (656 aa).

Residues 1-107 (MAPLTKKTNG…GGENGNHTEQ (107 aa)) are disordered. Over residues 13-23 (SAKEVSHSEKK) the composition is skewed to basic and acidic residues. Residues Ser31, Ser34, and Ser35 each carry the phosphoserine; by CK2 modification. Ser34 and Ser35 each carry phosphoserine. A compositionally biased stretch (acidic residues) spans 52–89 (SDDDDLDDLSTSDSEAEEEADELDISDDSEEHENENEE). Residues 90-107 (KEGKDKSEGGENGNHTEQ) are compositionally biased toward basic and acidic residues. The region spanning 133 to 483 (RLRVKTPPLP…ELLSKFAPMF (351 aa)) is the PUM-HD domain. Pumilio repeat units follow at residues 155-191 (ELSK…QIVD), 192-227 (ALKG…TIIN), 228-264 (ELHG…QMIK), 340-376 (ELLH…LILK), 377-413 (ALKN…KTFS), and 415-450 (TVKE…PIVK).

Belongs to the PUF6 family. As to quaternary structure, component of the ASH1 mRNP composed of at least PUF6, SHE2, SHE3, SHE1 and the ASH1 mRNA. Interacts with SHE2 and FUN12. In terms of processing, phosphorylation by CK2 relieves translational repression activity.

Its subcellular location is the bud tip. It is found in the nucleus. The protein localises to the nucleolus. Functionally, RNA-binding protein involved in post-transcriptional regulation. Component of the ASH1 mRNP which transports the ASH1 mRNA to the distal tip of the bud, where the ASH1 protein is translated and targeted to the daughter cell nucleus. Binds to the ASH1 3'-UTR containing the PUF consensus UUGU segment and represses its translation. This silencing of ASH1 mRNA is critical for asymmetric seggregation of ASH1 to the daughter cell nucleus. The polypeptide is Pumilio homology domain family member 6 (PUF6) (Saccharomyces cerevisiae (strain ATCC 204508 / S288c) (Baker's yeast)).